We begin with the raw amino-acid sequence, 388 residues long: MKIHEYQGKDILRQFGVPVPRGIPAFTVQEAVEAAQKLGGPVWVVKAQIHAGGRGKGGGVQLAKTIDEVRRLAGSMLGMQLKTHQTGPEGQKVRRLYIEEGADIGKEYYLSIVTDRATQKLAFIASSEGGMDIEEVKRAKPEMIITEFVDPLAGLGPEQALKIAVGIGLPAPAQAQAQAVDIMRRLYQCYMDTDASLLEINPLNCDGQNRLTALDAKFNFDANALWRHPEIVAYRDFEEEDPAEVLASKFDLAYISMDGNIGCLVNGAGLAMATMDTIKLFGGAPANFLDVGGGATAEKVTEAFKIMLGNPKVKGILVNIFGGIMRCDTIATGVISACKAVNLSVPLVVRMKGTNEEPGKKLLAESGLPIIAADTMADAAQRIVAAVR.

The ATP-grasp domain occupies 9–246; it reads KDILRQFGVP…FEEEDPAEVL (238 aa). Residues Lys-46, 53 to 55, Glu-99, Ala-102, and Glu-107 each bind ATP; that span reads GRG. 2 residues coordinate Mg(2+): Asn-201 and Asp-215. Residues Asn-266 and 323 to 325 each bind substrate; that span reads GIM.

It belongs to the succinate/malate CoA ligase beta subunit family. Heterotetramer of two alpha and two beta subunits. Requires Mg(2+) as cofactor.

It catalyses the reaction succinate + ATP + CoA = succinyl-CoA + ADP + phosphate. The enzyme catalyses GTP + succinate + CoA = succinyl-CoA + GDP + phosphate. Its pathway is carbohydrate metabolism; tricarboxylic acid cycle; succinate from succinyl-CoA (ligase route): step 1/1. Its function is as follows. Succinyl-CoA synthetase functions in the citric acid cycle (TCA), coupling the hydrolysis of succinyl-CoA to the synthesis of either ATP or GTP and thus represents the only step of substrate-level phosphorylation in the TCA. The beta subunit provides nucleotide specificity of the enzyme and binds the substrate succinate, while the binding sites for coenzyme A and phosphate are found in the alpha subunit. In Verminephrobacter eiseniae (strain EF01-2), this protein is Succinate--CoA ligase [ADP-forming] subunit beta.